A 284-amino-acid chain; its full sequence is Homeobox-leucine zipper protein HAT4 (284 aa).

The segment covering 48–59 has biased composition (polar residues); the sequence is ESFTSSVPNSDS. Residues 48-132 are disordered; sequence ESFTSSVPNS…DGDNSRKKLR (85 aa). Positions 89-100 are enriched in low complexity; the sequence is VSSPNSTVSSST. Residues 126–185 constitute a DNA-binding region (homeobox); sequence NSRKKLRLSKDQSAILEETFKDHSTLNPKQKQALAKQLGLRARQVEVWFQNRRARTKLKQ. The interval 193–214 is leucine-zipper; that stretch reads LRRCCENLTEENRRLQKEVTEL.

It belongs to the HD-ZIP homeobox family. Class II subfamily. In terms of assembly, interacts with DNA as homodimer. As to expression, predominantly expressed in leaves and stems.

The protein resides in the nucleus. Its function is as follows. Probable transcription factor involved in the negative regulation of cell elongation and specific cell proliferation processes such as lateral root formation and secondary growth of the vascular system. Acts as a mediator of the red/far-red light effects on leaf cell expansion in the shading response. Binds to the DNA sequence 5'-CAAT[GC]ATTG-3'. Negatively regulates its own expression. This Arabidopsis thaliana (Mouse-ear cress) protein is Homeobox-leucine zipper protein HAT4 (HAT4).